The primary structure comprises 613 residues: GPI mannosyltransferase 3 (613 aa).

Residue asparagine 19 is glycosylated (N-linked (GlcNAc...) asparagine). A run of 12 helical transmembrane segments spans residues 22–42 (FFLRDIIVIRLINAWWIATFF), 83–103 (LFAGVYLVADFISSHILPVGI), 106–126 (ATILVAVPQALQAVIAGLGDW), 132–152 (AVSIYGANSNVSFFALFLQIF), 168–188 (LEMTLTVMAMYYWPWELLGVA), 216–236 (LAVVLRPTNILIWATIVLFTI), 252–272 (VVTLIREAIWCGSLILAISAA), 280–300 (FWTFPAYNFLYFNLSKSLAVF), 309–329 (YFLQGLPLICTTSLPFAVASL), 342–362 (FNVLKTLAYTVFTTVGALSLI), 369–389 (FIYPLLPALSILAAPYTASFF), and 411–431 (YLFVALGVNMFLAGYLSFFHQ).

It belongs to the glycosyltransferase 22 family. PIGB subfamily.

It localises to the endoplasmic reticulum membrane. The protein operates within glycolipid biosynthesis; glycosylphosphatidylinositol-anchor biosynthesis. Functionally, mannosyltransferase involved in glycosylphosphatidylinositol-anchor biosynthesis. Transfers the third mannose to Man2-GlcN-acyl-PI during GPI precursor assembly. The polypeptide is GPI mannosyltransferase 3 (GPI10) (Gibberella zeae (strain ATCC MYA-4620 / CBS 123657 / FGSC 9075 / NRRL 31084 / PH-1) (Wheat head blight fungus)).